We begin with the raw amino-acid sequence, 388 residues long: P2X purinoceptor 4 (388 aa).

Residues 1–33 (MAGCCSVLGSFLFEYDTPRIVLIRSRKVGLMNR) lie on the Cytoplasmic side of the membrane. Residues 34–54 (AVQLLILAYVIGWVFVWEKGY) form a helical membrane-spanning segment. The Extracellular portion of the chain corresponds to 55-338 (QETDSVVSSV…KFDIIPTMIN (284 aa)). Positions 67 and 69 each coordinate ATP. The CTP site is built by lysine 67 and lysine 69. Asparagine 75 and asparagine 110 each carry an N-linked (GlcNAc...) asparagine glycan. 3 cysteine pairs are disulfide-bonded: cysteine 116–cysteine 165, cysteine 126–cysteine 149, and cysteine 132–cysteine 159. 2 N-linked (GlcNAc...) asparagine glycosylation sites follow: asparagine 153 and asparagine 184. ATP contacts are provided by threonine 186 and leucine 188. Threonine 186 contributes to the CTP binding site. Residues asparagine 199 and asparagine 208 are each glycosylated (N-linked (GlcNAc...) asparagine). 2 disulfides stabilise this stretch: cysteine 217/cysteine 227 and cysteine 261/cysteine 270. ATP contacts are provided by asparagine 293, arginine 295, and lysine 313. CTP contacts are provided by asparagine 293, arginine 295, and lysine 313. The chain crosses the membrane as a helical span at residues 339-359 (VGSGLALLGVATVLCDVIVLY). Topologically, residues 360 to 388 (CMKKKYYYRDKKYKYVEDYEQGLSGEMNQ) are cytoplasmic.

It belongs to the P2X receptor family. In terms of assembly, functional P2RXs are organized as homomeric and heteromeric trimers. Forms heterotrimer with P2RX1. Interacts with P2RX7 (via C-terminus); this interaction is functional only in the presence of ATP. Forms heterotrimer with P2RX4; functional differences between homomeric P2RX4 and P2RX4/6 heterotrimer are minor. Interacts with AP1M2. Widespread distribution in the brain. Strongly expressed in microglial cells. Also expressed in epithelial cells.

It localises to the cell membrane. It is found in the lysosome membrane. It carries out the reaction K(+)(in) = K(+)(out). The catalysed reaction is Na(+)(in) = Na(+)(out). The enzyme catalyses Ca(2+)(in) = Ca(2+)(out). With respect to regulation, activated by ATP. pH-dependent and inhibited by acidic pH. Functionally, ATP-gated nonselective transmembrane cation channel permeable to potassium, sodium and calcium. CTP, but not GTP or UTP, functions as a weak affinity agonist for P2RX4. Activated by extracellularly released ATP, it plays multiple role in immunity and central nervous system physiology. Plays a key role in initial steps of T-cell activation and Ca(2+) microdomain formation. Also participates in basal T-cell activity without TCR/CD3 stimulation. Promotes the differentiation and activation of Th17 cells via expression of retinoic acid-related orphan receptor C/RORC. Upon activation, drives microglia motility via the PI3K/Akt pathway. Could also function as an ATP-gated cation channel of lysosomal membranes. The sequence is that of P2X purinoceptor 4 (P2rx4) from Rattus norvegicus (Rat).